The chain runs to 288 residues: Acetyl-coenzyme A carboxylase carboxyl transferase subunit beta (288 aa).

The CoA carboxyltransferase N-terminal domain maps to Leu32–Val288. Zn(2+) is bound by residues Cys36, Cys39, Cys54, and Cys57. A C4-type zinc finger spans residues Cys36–Cys57.

It belongs to the AccD/PCCB family. As to quaternary structure, acetyl-CoA carboxylase is a heterohexamer composed of biotin carboxyl carrier protein (AccB), biotin carboxylase (AccC) and two subunits each of ACCase subunit alpha (AccA) and ACCase subunit beta (AccD). The cofactor is Zn(2+).

The protein resides in the cytoplasm. It carries out the reaction N(6)-carboxybiotinyl-L-lysyl-[protein] + acetyl-CoA = N(6)-biotinyl-L-lysyl-[protein] + malonyl-CoA. It participates in lipid metabolism; malonyl-CoA biosynthesis; malonyl-CoA from acetyl-CoA: step 1/1. In terms of biological role, component of the acetyl coenzyme A carboxylase (ACC) complex. Biotin carboxylase (BC) catalyzes the carboxylation of biotin on its carrier protein (BCCP) and then the CO(2) group is transferred by the transcarboxylase to acetyl-CoA to form malonyl-CoA. The protein is Acetyl-coenzyme A carboxylase carboxyl transferase subunit beta of Lactococcus lactis subsp. lactis (strain IL1403) (Streptococcus lactis).